The following is a 600-amino-acid chain: NADH-quinone oxidoreductase subunit C/D (600 aa).

The interval 1-190 (MVNNMTDLTA…DPFELTKAKQ (190 aa)) is NADH dehydrogenase I subunit C. The tract at residues 214–600 (DFMFLNLGPN…IDFVMSDVDR (387 aa)) is NADH dehydrogenase I subunit D.

It in the N-terminal section; belongs to the complex I 30 kDa subunit family. This sequence in the C-terminal section; belongs to the complex I 49 kDa subunit family. In terms of assembly, NDH-1 is composed of 13 different subunits. Subunits NuoB, CD, E, F, and G constitute the peripheral sector of the complex.

Its subcellular location is the cell inner membrane. The enzyme catalyses a quinone + NADH + 5 H(+)(in) = a quinol + NAD(+) + 4 H(+)(out). In terms of biological role, NDH-1 shuttles electrons from NADH, via FMN and iron-sulfur (Fe-S) centers, to quinones in the respiratory chain. The immediate electron acceptor for the enzyme in this species is believed to be ubiquinone. Couples the redox reaction to proton translocation (for every two electrons transferred, four hydrogen ions are translocated across the cytoplasmic membrane), and thus conserves the redox energy in a proton gradient. This Salmonella paratyphi A (strain ATCC 9150 / SARB42) protein is NADH-quinone oxidoreductase subunit C/D.